The following is a 3961-amino-acid chain: Replicase polyprotein 1ab (3961 aa).

The segment at Cys-8 to Cys-28 adopts a C4-type; atypical zinc-finger fold. In terms of domain architecture, Peptidase C31 spans Glu-69–Met-180. Positions Glu-69–Thr-182 are PCP1-alpha. Active-site for Nsp1-alpha papain-like cysteine proteinase activity residues include Cys-76 and His-146. Residues Ile-199–Ser-200 are important for host EIF2AK2 inhibition. The interval Asp-263–Tyr-382 is PCP1-beta. The region spanning Asp-263–Gly-383 is the Peptidase C32 domain. Residues Cys-270 and His-339 each act as for Nsp1-beta papain-like cysteine proteinase activity in the active site. Positions Leu-426–Pro-513 are OTU-like. Residues His-428–Leu-535 enclose the Peptidase C33 domain. Active-site for Nsp2 cysteine proteinase activity residues include Cys-437 and His-506. Disordered stretches follow at residues Arg-809–Glu-862, Ala-898–Gly-979, and Asn-1153–Pro-1213. Pro residues predominate over residues Trp-810–Val-819. A run of 8 helical transmembrane segments spans residues Leu-1266–Phe-1286, Gly-1296–Val-1316, Ser-1345–Ala-1365, Ile-1368–Val-1388, Leu-1583–Val-1603, Ala-1650–Ile-1670, Cys-1685–Phe-1705, and Ile-1719–Val-1739. The tract at residues Leu-1266–Val-1388 is HD1. The tract at residues Leu-1583–Trp-1745 is HD2. One can recognise a Peptidase S32 domain in the interval Gly-1810 to Glu-2013. Active-site charge relay system; for 3C-like serine proteinase activity residues include His-1848, Asp-1873, and Ser-1927. The next 5 helical transmembrane spans lie at Leu-2012 to Met-2032, Phe-2060 to Ile-2080, Trp-2092 to Thr-2112, Ser-2137 to Phe-2157, and Gln-2164 to Gly-2184. An HD3 region spans residues Trp-2036–Phe-2157. The tract at residues Pro-2329 to Asp-2358 is disordered. The span at Thr-2330 to Pro-2344 shows a compositional bias: pro residues. Positions Ile-2488–Gly-2651 constitute a NiRAN domain. Residues Gly-2890–Tyr-3024 enclose the RdRp catalytic domain. The 64-residue stretch at Gly-3145 to Leu-3208 folds into the AV ZBD domain. The Zn(2+) site is built by Cys-3151, Cys-3154, Cys-3164, Cys-3169, His-3172, His-3174, His-3176, His-3178, Cys-3185, His-3187, Cys-3194, and Cys-3197. The region spanning Ala-3265–Leu-3417 is the (+)RNA virus helicase ATP-binding domain. Position 3298–3305 (Gly-3298–Gln-3305) interacts with ATP. In terms of domain architecture, (+)RNA virus helicase C-terminal spans Lys-3418 to Val-3546. The AV-Nsp11N/CoV-Nsp15M domain maps to Glu-3585–Gln-3681. The NendoU domain occupies Leu-3683–Phe-3805. Active-site residues include His-3714, His-3729, and Lys-3758.

The protein belongs to the arteriviridae polyprotein family. In terms of assembly, nsp1-alpha papain-like: Interacts with host RNF31. Interacts with host EIF2AK2; this interaction occurs in host stress granules and leads to EIF2AK2 inhibition. Interacts with host G3BP1; this interaction probably plays a role in Nsp1-beta-mediated inhibition of host EIF2AK2. As to quaternary structure, interacts with host DDX18; this interaction redistributes host DDX18 to the cytoplasm. In terms of assembly, interacts with host IFITM1. Interacts with host DDX5. As to quaternary structure, interacts with host OTULIN. In terms of assembly, interacts with host LGALS3. Specific enzymatic cleavages in vivo by its own proteases yield mature proteins. Nsp1 is autocleaved into two subunits, Nsp1-alpha and Nsp1-beta. There are two alternative pathways for processing. Either nsp4-5 is cleaved, which represents the major pathway or the nsp5-6 and nsp6-7 are processed, which represents the minor pathway. The major pathway occurs when nsp2 acts as a cofactor for nsp4.

The protein resides in the host nucleus. The protein localises to the host cytoplasm. It localises to the host membrane. Its subcellular location is the host endoplasmic reticulum. It is found in the host perinuclear region. It carries out the reaction RNA(n) + a ribonucleoside 5'-triphosphate = RNA(n+1) + diphosphate. The enzyme catalyses ATP + H2O = ADP + phosphate + H(+). The catalysed reaction is Thiol-dependent hydrolysis of ester, thioester, amide, peptide and isopeptide bonds formed by the C-terminal Gly of ubiquitin (a 76-residue protein attached to proteins as an intracellular targeting signal).. It catalyses the reaction uridylyl-uridylyl-ribonucleotide-RNA = a 3'-end uridylyl-2',3'-cyclophospho-uridine-RNA + a 5'-end dephospho-ribonucleoside-RNA. Functionally, contains the activities necessary for the transcription of negative stranded RNA, leader RNA, subgenomic mRNAs and progeny virion RNA as well as proteinases responsible for the cleavage of the polyprotein into functional products. In terms of biological role, inhibits host IFN-beta production. Plays a role in the degradation of the host transcriptional activator CREBBP protein. The degradation of host CREBBP which is a key component of the IFN enhanceosome is likely responsible for the inhibition of interferon mediated by Nsp1-alpha. Also participates in the inhibition of host NF-kappa-B activation by counteracting LUBAC-dependent induction of NF-kappa-B. Reduces host NEMO ubiquitination by blocking the interaction between the two LUBAC complex components RNF31 and SHARPIN. Plays a role in blocking host mRNA nuclear export to the cytoplasm and subversion of host protein synthesis. Additionally, inhibits the interferon-activated JAK/STAT signal transduction by mediating the ubiquitination and subsequent proteasomal degradation of host KPNA1. Repurposes the host antiviral stress granules into a proviral platform to counteract the EIF2AK2/PKR restriction, thereby regulating the host inflammatory response. Its function is as follows. Multifunctional protein that acts as a viral protease and as a viral antagonist of host immune response. Cleaves the nsp2/nsp3 site in the viral polyprotein. Displays deubiquitinating activity that cleaves both ubiquitinated and ISGylated products and therefore inhibits ubiquitin and ISG15-dependent host innate immunity. Also deubiquinates host NFKBIA, thereby interfering with NFKBIA degradation and impairing subsequent NF-kappa-B activation. Functionally, plays a role in the inhibition of the immune response by interacting with host IFITM1. This interaction leads to the proteasomal degradation of the IFN-induced antiviral protein IFITM1. In terms of biological role, cleaves the majority of cleavage sites present in the C-terminus of the polyprotein. Triggers host apoptosis through caspase-3, -8, and -9 activations. Subverts host innate immune responses through its protease activity. Targets the NF-kappa-B essential modulator NEMO and mediates its cleavage. Blocks host interferon beta induction and downstream signaling by cleaving mitochondrial MAVS, dislodging it from the mitochondria. Impairs host defense by cleaving host mRNA-decapping enzyme DCP1A to attenuate its antiviral activity. Plays a role in the initial induction of autophagosomes from host endoplasmic reticulum. Its function is as follows. Plays a role in the inhibition of host STAT3 signaling pathway by inducing the degradation of STAT3. Functionally, responsible for replication and transcription of the viral RNA genome. In terms of biological role, displays RNA and DNA duplex-unwinding activities with 5' to 3' polarity. Plays a role in viral transcription/replication and prevents the simultaneous activation of host cell dsRNA sensors, such as MDA5/IFIH1, OAS, PKR and NLRP3 inflammasome. Acts by degrading the 5'-polyuridines generated during replication of the poly(A) region of viral genomic and subgenomic RNAs. Catalyzes a two-step reaction in which a 2'3'-cyclic phosphate (2'3'-cP) is first generated by 2'-O transesterification, which is then hydrolyzed to a 3'-phosphate (3'-P). If not degraded, poly(U) RNA would hybridize with poly(A) RNA tails and activate host dsRNA sensors. Also plays a role in the inhibition of host type I interferon production by recruiting host OTULIN to promote removal of linear ubiquitination targeting host NEMO. This chain is Replicase polyprotein 1ab (rep), found in Porcine reproductive and respiratory syndrome virus (strain 16244B) (PRRSV).